A 301-amino-acid polypeptide reads, in one-letter code: Probable alpha-L-glutamate ligase 1 (301 aa).

Residues 104–287 form the ATP-grasp domain; that stretch reads MQLMSRRGIG…VAGAIIAFIE (184 aa). ATP contacts are provided by residues lysine 141, 178–179, aspartate 187, and 211–213; these read EY and RSN. 3 residues coordinate Mg(2+): aspartate 248, glutamate 260, and asparagine 262. Positions 248, 260, and 262 each coordinate Mn(2+).

It belongs to the RimK family. Mg(2+) serves as cofactor. The cofactor is Mn(2+).

The chain is Probable alpha-L-glutamate ligase 1 from Shewanella amazonensis (strain ATCC BAA-1098 / SB2B).